The primary structure comprises 100 residues: Small ribosomal subunit protein uS14c (100 aa).

It belongs to the universal ribosomal protein uS14 family. As to quaternary structure, part of the 30S ribosomal subunit.

It is found in the plastid. Its subcellular location is the chloroplast. Functionally, binds 16S rRNA, required for the assembly of 30S particles. The polypeptide is Small ribosomal subunit protein uS14c (Helianthus annuus (Common sunflower)).